A 73-amino-acid polypeptide reads, in one-letter code: Sodium channel neurotoxin MeuNaTxalpha-13 (73 aa).

The signal sequence occupies residues 1-5; the sequence is TGVES. Positions 7 to 71 constitute an LCN-type CS-alpha/beta domain; it reads RDAYIAKPHN…VPIRIPGKCH (65 aa). 4 disulfide bridges follow: Cys17-Cys70, Cys21-Cys43, Cys29-Cys53, and Cys33-Cys55. Positions 72-73 are cleaved as a propeptide — removed by a carboxypeptidase; sequence RR.

This sequence belongs to the long (4 C-C) scorpion toxin superfamily. Sodium channel inhibitor family. Alpha subfamily. In terms of tissue distribution, expressed by the venom gland.

It is found in the secreted. Its function is as follows. Alpha toxins bind voltage-independently at site-3 of sodium channels (Nav) and inhibit the inactivation of the activated channels, thereby blocking neuronal transmission. The polypeptide is Sodium channel neurotoxin MeuNaTxalpha-13 (Mesobuthus eupeus (Lesser Asian scorpion)).